The primary structure comprises 328 residues: Phosphate acyltransferase (328 aa).

Belongs to the PlsX family. As to quaternary structure, homodimer. Probably interacts with PlsY.

It localises to the cytoplasm. It carries out the reaction a fatty acyl-[ACP] + phosphate = an acyl phosphate + holo-[ACP]. It participates in lipid metabolism; phospholipid metabolism. Its function is as follows. Catalyzes the reversible formation of acyl-phosphate (acyl-PO(4)) from acyl-[acyl-carrier-protein] (acyl-ACP). This enzyme utilizes acyl-ACP as fatty acyl donor, but not acyl-CoA. The chain is Phosphate acyltransferase from Mycoplasma genitalium (strain ATCC 33530 / DSM 19775 / NCTC 10195 / G37) (Mycoplasmoides genitalium).